The primary structure comprises 345 residues: Anthranilate phosphoribosyltransferase (345 aa).

5-phospho-alpha-D-ribose 1-diphosphate contacts are provided by residues Gly-84, 87 to 88, Thr-92, 94 to 97, 112 to 120, and Ser-124; these read GD, NIST, and KHGNRSVSS. Gly-84 is a binding site for anthranilate. Ser-96 provides a ligand contact to Mg(2+). Asn-115 is an anthranilate binding site. Position 170 (Arg-170) interacts with anthranilate. Residues Asp-229 and Glu-230 each coordinate Mg(2+).

Belongs to the anthranilate phosphoribosyltransferase family. As to quaternary structure, homodimer. Requires Mg(2+) as cofactor.

It carries out the reaction N-(5-phospho-beta-D-ribosyl)anthranilate + diphosphate = 5-phospho-alpha-D-ribose 1-diphosphate + anthranilate. It functions in the pathway amino-acid biosynthesis; L-tryptophan biosynthesis; L-tryptophan from chorismate: step 2/5. In terms of biological role, catalyzes the transfer of the phosphoribosyl group of 5-phosphorylribose-1-pyrophosphate (PRPP) to anthranilate to yield N-(5'-phosphoribosyl)-anthranilate (PRA). This Xanthomonas euvesicatoria pv. vesicatoria (strain 85-10) (Xanthomonas campestris pv. vesicatoria) protein is Anthranilate phosphoribosyltransferase.